Reading from the N-terminus, the 198-residue chain is Uracil phosphoribosyltransferase homolog (198 aa).

Belongs to the UPRTase family.

The protein resides in the plastid. It localises to the chloroplast. This Pyropia yezoensis (Susabi-nori) protein is Uracil phosphoribosyltransferase homolog.